The primary structure comprises 269 residues: 3-methyl-2-oxobutanoate hydroxymethyltransferase (269 aa).

Positions 49 and 88 each coordinate Mg(2+). Residues 49-50 (DS), D88, and K118 each bind 3-methyl-2-oxobutanoate. E120 is a binding site for Mg(2+). E186 (proton acceptor) is an active-site residue.

It belongs to the PanB family. In terms of assembly, homodecamer; pentamer of dimers. It depends on Mg(2+) as a cofactor.

The protein localises to the cytoplasm. It carries out the reaction 3-methyl-2-oxobutanoate + (6R)-5,10-methylene-5,6,7,8-tetrahydrofolate + H2O = 2-dehydropantoate + (6S)-5,6,7,8-tetrahydrofolate. Its pathway is cofactor biosynthesis; (R)-pantothenate biosynthesis; (R)-pantoate from 3-methyl-2-oxobutanoate: step 1/2. Its function is as follows. Catalyzes the reversible reaction in which hydroxymethyl group from 5,10-methylenetetrahydrofolate is transferred onto alpha-ketoisovalerate to form ketopantoate. The polypeptide is 3-methyl-2-oxobutanoate hydroxymethyltransferase (Pelobacter propionicus (strain DSM 2379 / NBRC 103807 / OttBd1)).